Consider the following 372-residue polypeptide: Tomoregulin-1 (372 aa).

A signal peptide spans 1–36 (MGAQAPLRLPAAPPLAVCGYTSVLLLFAFCLPGSRA). At 37-322 (SNQPAGGGGD…VPSRQKLTHV (286 aa)) the chain is on the extracellular side. The N-linked (GlcNAc...) asparagine glycan is linked to asparagine 55. In terms of domain architecture, Kazal-like 1 spans 90–137 (ACQFQCHTNYIPVCGSNGDTYQNECFLRRAACKHQKDITVVARGPCYS). Cystine bridges form between cysteine 91–cysteine 121, cysteine 95–cysteine 114, and cysteine 103–cysteine 135. The N-linked (GlcNAc...) asparagine glycan is linked to asparagine 139. Positions 139–161 (NGSGSGEGEEEGSGAGAHRKHSK) are disordered. A Kazal-like 2 domain is found at 181–229 (VCNIDCSGYSFNPVCASDGSSYNNPCFVREASCIKQEQIDIRHLGHCTD). 6 cysteine pairs are disulfide-bonded: cysteine 182–cysteine 213, cysteine 186–cysteine 206, cysteine 195–cysteine 227, cysteine 267–cysteine 280, cysteine 275–cysteine 291, and cysteine 293–cysteine 302. One can recognise an EGF-like domain in the interval 263 to 303 (SHMPCPENLNGYCIHGKCEFIYSTQKASCRCESGYTGQHCE). A helical transmembrane segment spans residues 323-343 (LIAAIIGAVQIAIIVAIVMCI). Residues 344–372 (TRKCPKNNRGRRQKQNLGHFTSDTSSRMV) are Cytoplasmic-facing. The tract at residues 351 to 372 (NRGRRQKQNLGHFTSDTSSRMV) is disordered. Positions 358–372 (QNLGHFTSDTSSRMV) are enriched in polar residues.

It belongs to the tomoregulin family. In terms of assembly, may interact with ST14. As to expression, maily expressed in neurons. Expressed in brain, neurointermediate lobe, pars distalis, pancreas, ovary and testis.

It is found in the cell membrane. In terms of biological role, neuron-specific restriction factor that prevents herpes simplex virus 1 (HHV-1) infection in the brain by blocking viral entry. Also able to restrict herpes simplex virus 2 (HHV-2) infection, although to a lesser extent. Acts by preventing the association between the viral glycoprotein D (gD) and its cell surface receptor NECTIN1, thereby inhibiting fusion of the virus and the cell membrane. Also able to prevent the association between the viral glycoprotein B (gB) and MYH9/NMMHC-IIA and MYH10/NMMHC-IIB receptors. This is Tomoregulin-1 from Mus musculus (Mouse).